Here is a 296-residue protein sequence, read N- to C-terminus: 4-hydroxy-tetrahydrodipicolinate synthase (296 aa).

Pyruvate is bound at residue T49. Y137 (proton donor/acceptor) is an active-site residue. The Schiff-base intermediate with substrate role is filled by K165. Pyruvate is bound at residue I207.

Belongs to the DapA family. As to quaternary structure, homotetramer; dimer of dimers.

It is found in the cytoplasm. It carries out the reaction L-aspartate 4-semialdehyde + pyruvate = (2S,4S)-4-hydroxy-2,3,4,5-tetrahydrodipicolinate + H2O + H(+). The protein operates within amino-acid biosynthesis; L-lysine biosynthesis via DAP pathway; (S)-tetrahydrodipicolinate from L-aspartate: step 3/4. In terms of biological role, catalyzes the condensation of (S)-aspartate-beta-semialdehyde [(S)-ASA] and pyruvate to 4-hydroxy-tetrahydrodipicolinate (HTPA). The sequence is that of 4-hydroxy-tetrahydrodipicolinate synthase from Bradyrhizobium diazoefficiens (strain JCM 10833 / BCRC 13528 / IAM 13628 / NBRC 14792 / USDA 110).